The following is a 316-amino-acid chain: Transaldolase (316 aa).

Lysine 132 functions as the Schiff-base intermediate with substrate in the catalytic mechanism.

This sequence belongs to the transaldolase family. Type 1 subfamily.

The protein localises to the cytoplasm. The enzyme catalyses D-sedoheptulose 7-phosphate + D-glyceraldehyde 3-phosphate = D-erythrose 4-phosphate + beta-D-fructose 6-phosphate. It functions in the pathway carbohydrate degradation; pentose phosphate pathway; D-glyceraldehyde 3-phosphate and beta-D-fructose 6-phosphate from D-ribose 5-phosphate and D-xylulose 5-phosphate (non-oxidative stage): step 2/3. Functionally, transaldolase is important for the balance of metabolites in the pentose-phosphate pathway. This Methylomonas aminofaciens protein is Transaldolase.